Reading from the N-terminus, the 299-residue chain is 33 kDa chaperonin (299 aa).

2 cysteine pairs are disulfide-bonded: Cys234/Cys236 and Cys268/Cys271.

The protein belongs to the HSP33 family. Post-translationally, under oxidizing conditions two disulfide bonds are formed involving the reactive cysteines. Under reducing conditions zinc is bound to the reactive cysteines and the protein is inactive.

The protein resides in the cytoplasm. In terms of biological role, redox regulated molecular chaperone. Protects both thermally unfolding and oxidatively damaged proteins from irreversible aggregation. Plays an important role in the bacterial defense system toward oxidative stress. This is 33 kDa chaperonin from Pseudomonas putida (strain ATCC 47054 / DSM 6125 / CFBP 8728 / NCIMB 11950 / KT2440).